Here is a 351-residue protein sequence, read N- to C-terminus: Protein EXPRESSION OF TERPENOIDS 1 (351 aa).

A disordered region spans residues 1 to 23 (MANFFSLGGNQEQQHQEISSSQA). The segment covering 11–22 (QEQQHQEISSSQ) has biased composition (low complexity). C129, C132, C140, C145, C149, and C156 together coordinate Zn(2+). The zn(2)-C6 fungal-type; degenerate DNA-binding region spans 129 to 156 (CQDCGNQAKKDCQHMRCRTCCKSRGFQC). The tract at residues 170-219 (RRERQQQLAALQQQQQGHNNNNNNHKNKRQREDPSASSLVSTRLPSNTNG) is disordered. Over residues 175–193 (QQLAALQQQQQGHNNNNNN) the composition is skewed to low complexity. Residues 204-219 (SASSLVSTRLPSNTNG) are compositionally biased toward polar residues. The Required for homo- and heterodimerization motif lies at 258 to 261 (IGGH). Positions 286 to 320 (TSSGGSAGGVQHHHHNSAAVATATTTSGGDATAAG) are disordered. Positions 303 to 320 (AAVATATTTSGGDATAAG) are enriched in low complexity.

Belongs to the SHI protein family. As to quaternary structure, forms homodimers and heterodimers with LRP1.

The protein resides in the nucleus. Transcription activator involved in the transcriptional regulation of terpene biosynthesis in glandular trichomes. Binds to the promoter of the linalool synthase TPS5 and promotes TPS5 gene transactivation. Acts synergistically with MYC1 in the transactivation of TPS5. In Solanum lycopersicum (Tomato), this protein is Protein EXPRESSION OF TERPENOIDS 1.